The primary structure comprises 221 residues: Interleukin-12 subunit alpha (221 aa).

The first 25 residues, 1 to 25 (MCPLRSLLLLSTLVLLHHLPHLSLG), serve as a signal peptide directing secretion. 3 disulfide bridges follow: cysteine 39–cysteine 112, cysteine 66–cysteine 198, and cysteine 87–cysteine 125. Asparagine 41 and asparagine 95 each carry an N-linked (GlcNAc...) asparagine glycan.

The protein belongs to the IL-6 superfamily. Heterodimer with IL12B; disulfide-linked. This heterodimer is known as interleukin IL-12. Heterodimer with EBI3/IL27B; not disulfide-linked. This heterodimer is known as interleukin IL-35. Interacts with NBR1; this interaction promotes IL-12 secretion.

It localises to the secreted. Functionally, heterodimerizes with IL12B to form the IL-12 cytokine or with EBI3/IL27B to form the IL-35 cytokine. IL-12 is primarily produced by professional antigen-presenting cells (APCs) such as B-cells and dendritic cells (DCs) as well as macrophages and granulocytes and regulates T-cell and natural killer-cell responses, induces the production of interferon-gamma (IFN-gamma), favors the differentiation of T-helper 1 (Th1) cells and is an important link between innate resistance and adaptive immunity. Mechanistically, exerts its biological effects through a receptor composed of IL12R1 and IL12R2 subunits. Binding to the receptor results in the rapid tyrosine phosphorylation of a number of cellular substrates including the JAK family kinases TYK2 and JAK2. In turn, recruited STAT4 gets phosphorylated and translocates to the nucleus where it regulates cytokine/growth factor responsive genes. As part of IL-35, plays essential roles in maintaining the immune homeostasis of the liver microenvironment and also functions as an immune-suppressive cytokine. Mediates biological events through unconventional receptors composed of IL12RB2 and gp130/IL6ST heterodimers or homodimers. Signaling requires the transcription factors STAT1 and STAT4, which form a unique heterodimer that binds to distinct DNA sites. This Cervus elaphus (Red deer) protein is Interleukin-12 subunit alpha (IL12A).